A 325-amino-acid polypeptide reads, in one-letter code: Gamma-hemolysin component B (325 aa).

A signal peptide spans 1–25 (MNMNKLVKSSVATSMALLLLSNTAN).

The protein belongs to the aerolysin family. As to quaternary structure, toxicity requires sequential binding and synergistic association of a class S and a class F component which form heterooligomeric complexes. HlgB (class F) associates with either hlgA thus forming an AB toxin or with hlgC thus forming a CB toxin. Interacts with host AMFR.

Its function is as follows. Toxin that seems to act by forming pores in the membrane of the cell. Has a hemolytic and a leucotoxic activity. Promotes host AMFR-mediated inflammation by mediating 'Lys-27'-linked ubiquitination of TAB3, TAK1-TAB3 complex formation and phosphorylation of TAK1/MAP3K7. In turn, activates host NF-kappa-B signaling pathway. The chain is Gamma-hemolysin component B (hlgB) from Staphylococcus aureus (strain MRSA252).